Reading from the N-terminus, the 171-residue chain is Acetyltransferase PA2271 (171 aa).

In terms of domain architecture, N-acetyltransferase spans 3 to 162 (YRIRTSRDED…HEQEIGFAAD (160 aa)). CoA-binding positions include 84 to 86 (LSI) and 128 to 130 (PFY).

In terms of biological role, catalyzes the transfer of an acetyl group from acetyl coenzyme A (AcCoA) to an acceptor substrate and releases both CoA and the acetylated product. It can use a variety of substrates including spermidine, spermine and N(8)-acetylspermidine, 7-aminocephalosporanic acid, colistin and thiamine. The chain is Acetyltransferase PA2271 from Pseudomonas aeruginosa (strain ATCC 15692 / DSM 22644 / CIP 104116 / JCM 14847 / LMG 12228 / 1C / PRS 101 / PAO1).